The sequence spans 231 residues: Homeobox protein engrailed-1a (231 aa).

Disordered regions lie at residues 1–29 (MEDQ…AHRN), 43–105 (GCKR…KDSQ), and 121–148 (DRPS…RPRT). The span at 43 to 56 (GCKRERERVTRDSG) shows a compositional bias: basic and acidic residues. The segment covering 68–102 (DGVSSSASSTVSSPVSSRQSNKVEQGSSKSSSPSK) has biased composition (low complexity). The homeobox DNA-binding region spans 143 to 202 (DKRPRTAFTAEQLQRLKAEFQTSRYITEQRRQALARELGLNESQIKIWFQNKRAKIKKSS).

Belongs to the engrailed homeobox family.

The protein resides in the nucleus. This Danio rerio (Zebrafish) protein is Homeobox protein engrailed-1a (eng1a).